A 332-amino-acid polypeptide reads, in one-letter code: MSGQHQITEQPSGNPLSRTSTLIQEKPLTPTSSHAETQKHLEAPRQSSFLIQLQDIRHAIRMPMAEFFGVALLIIFGAGSACQVVLSTNPNVASSDRGSFLSINLGWAIGIAMGAWVSGGISGGHINPAITIAMATYRGFPWRRVPSYIFAQVLGGVVGAALVYANYIHAIDIFEGGRHVRTQATASLFATYALPYMTQVSCFFSEFLATAVLSMMVLALTDNRNGAPTNGLLPFALFVLFIGLGASLGMETAYALNPARDFGPRLFLAMSGYGKALFNYRSQYWLWAPIIAPVLGAQAGGLLYDTFLYDGDNSPIKWRRASSQECQLAEVV.

Residues 1 to 66 are Cytoplasmic-facing; that stretch reads MSGQHQITEQ…RHAIRMPMAE (66 aa). A helical transmembrane segment spans residues 67–87; the sequence is FFGVALLIIFGAGSACQVVLS. Topologically, residues 88-100 are extracellular; it reads TNPNVASSDRGSF. A helical membrane pass occupies residues 101-121; the sequence is LSINLGWAIGIAMGAWVSGGI. The Cytoplasmic segment spans residues 122–144; that stretch reads SGGHINPAITIAMATYRGFPWRR. The NPA 1 motif lies at 127 to 129; sequence NPA. Residues 145–165 form a helical membrane-spanning segment; the sequence is VPSYIFAQVLGGVVGAALVYA. Residues 166-199 are Extracellular-facing; sequence NYIHAIDIFEGGRHVRTQATASLFATYALPYMTQ. The helical transmembrane segment at 200-220 threads the bilayer; sequence VSCFFSEFLATAVLSMMVLAL. Topologically, residues 221–230 are cytoplasmic; the sequence is TDNRNGAPTN. Residues 231–251 traverse the membrane as a helical segment; that stretch reads GLLPFALFVLFIGLGASLGME. Residues 252-283 are Extracellular-facing; the sequence is TAYALNPARDFGPRLFLAMSGYGKALFNYRSQ. The short motif at 257-259 is the NPA 2 element; that stretch reads NPA. Residues 284–304 form a helical membrane-spanning segment; sequence YWLWAPIIAPVLGAQAGGLLY. The Cytoplasmic segment spans residues 305-332; it reads DTFLYDGDNSPIKWRRASSQECQLAEVV.

Belongs to the MIP/aquaporin (TC 1.A.8) family.

It is found in the membrane. The catalysed reaction is H2O(in) = H2O(out). Water channel required to facilitate the transport of water across membranes. Does not mediate the transport carbon dioxide across the membrane. The chain is Aquaporin-7-1 from Laccaria bicolor (Bicoloured deceiver).